Here is a 408-residue protein sequence, read N- to C-terminus: Serine/threonine transporter SstT (408 aa).

The next 9 membrane-spanning stretches (helical) occupy residues 11–31 (LANG…VILA), 43–63 (FLGS…VFIL), 81–101 (PIVV…VVLS), 141–161 (ALMT…GLAL), 192–212 (IGIF…AIAG), 216–236 (LLAV…PLIV), 298–318 (MGGA…TLGI), 330–350 (VVAA…LLLI), and 357–377 (FGIS…IGVI).

It belongs to the dicarboxylate/amino acid:cation symporter (DAACS) (TC 2.A.23) family.

The protein localises to the cell inner membrane. It catalyses the reaction L-serine(in) + Na(+)(in) = L-serine(out) + Na(+)(out). The catalysed reaction is L-threonine(in) + Na(+)(in) = L-threonine(out) + Na(+)(out). Its function is as follows. Involved in the import of serine and threonine into the cell, with the concomitant import of sodium (symport system). The polypeptide is Serine/threonine transporter SstT (Shewanella sp. (strain W3-18-1)).